The following is an 823-amino-acid chain: Dolichyl-diphosphooligosaccharide--protein glycosyltransferase subunit STT3B (823 aa).

A disordered region spans residues 1–58 (MAEPSAPESKHKSSLNSSPWSGLMALGNSRHGHHGPGTQSASSAAAPKPGPPAGLSGG). Ala2 carries the post-translational modification N-acetylalanine. The Cytoplasmic segment spans residues 2-41 (AEPSAPESKHKSSLNSSPWSGLMALGNSRHGHHGPGTQSA). A phosphoserine mark is found at Ser13, Ser18, and Ser29. Residues 42-83 (SSAAAPKPGPPAGLSGGLSQPAGWQSLLSFTILFLAWLAGFS) traverse the membrane as a helical segment. Residues 84-170 (SRLFAVIRFE…VHIRDVCVFL (87 aa)) are Lumenal-facing. The DXD motif 1 signature appears at 98–100 (EFD). Asp100 is a binding site for Mn(2+). The chain crosses the membrane as a helical span at residues 171-189 (APTFSGLTSISTFLLTREL). Over 190 to 191 (WN) the chain is Cytoplasmic. A helical transmembrane segment spans residues 192–209 (QGAGLLAACFIAIVPGYI). Residues 210–220 (SRSVAGSFDNE) lie on the Lumenal side of the membrane. Residues Asp218 and Glu220 each contribute to the Mn(2+) site. A DXD motif 2 motif is present at residues 218–220 (DNE). Residues 221–240 (GIAIFALQFTYYLWVKSVKT) form a helical membrane-spanning segment. Topologically, residues 241-242 (GS) are cytoplasmic. The helical transmembrane segment at 243–257 (VFWTMCCCLSYFYMV) threads the bilayer. Residues 258–262 (SAWGG) are Lumenal-facing. The chain crosses the membrane as a helical span at residues 263-279 (YVFIINLIPLHVFVLLL). The Cytoplasmic segment spans residues 280-284 (MQRYS). The chain crosses the membrane as a helical span at residues 285 to 310 (KRVYIAYSTFYIVGLILSMQIPFVGF). At 311–318 (QPIRTSEH) the chain is on the lumenal side. Residues 319 to 338 (MAAAGVFALLQAYAFLQYLR) form a helical membrane-spanning segment. Over 339-347 (DRLTKQEFQ) the chain is Cytoplasmic. A helical transmembrane segment spans residues 348 to 368 (TLFFLGVSLAAGAVFLSVIYL). Topologically, residues 369–407 (TYTGYIAPWSGRFYSLWDTGYAKIHIPIIASVSEHQPTT) are lumenal. The short motif at 399-402 (SVSE) is the SVSE motif element. Residues 408–430 (WVSFFFDLHILVCTFPAGLWFCI) traverse the membrane as a helical segment. Residues 431–436 (KNINDE) lie on the Cytoplasmic side of the membrane. The helical transmembrane segment at 437–453 (RVFVALYAISAVYFAGV) threads the bilayer. At 454-457 (MVRL) the chain is on the lumenal side. Position 456 (Arg456) interacts with dolichyl diphosphooligosaccharide. The helical transmembrane segment at 458 to 479 (MLTLTPVVCMLSAIAFSNVFEH) threads the bilayer. The Cytoplasmic portion of the chain corresponds to 480–523 (YLGDDMKRENPPVEDSSDEDDKRNPGNLYDKAGKVRKHVTEQEK). The tract at residues 487–526 (RENPPVEDSSDEDDKRNPGNLYDKAGKVRKHVTEQEKPEE) is disordered. A phosphoserine mark is found at Ser495 and Ser496. Over residues 517 to 526 (HVTEQEKPEE) the composition is skewed to basic and acidic residues. Residues 524 to 549 (PEEGLGPNIKSIVTMLMLMLLMMFAV) form a helical membrane-spanning segment. The Lumenal portion of the chain corresponds to 550–823 (HCTWVTSNAY…KGKKTSKKTV (274 aa)). An interacts with target acceptor peptide in protein substrate region spans residues 601–603 (WWD). Positions 601–605 (WWDYG) match the WWDYG motif motif. Residue Tyr606 participates in dolichyl diphosphooligosaccharide binding. N-linked (GlcNAc...) asparagine glycans are attached at residues Asn613 and Asn620. N-linked (GlcNAc...) (high mannose) asparagine glycosylation is present at Asn624. Asn638 is a glycosylation site (N-linked (GlcNAc...) asparagine). The short motif at 668–675 (DINKFLWM) is the DK motif element.

It belongs to the STT3 family. In terms of assembly, component of the oligosaccharyltransferase (OST) complex. There are 2 OST complexes, OST-A and OST-B, which contain STT3A or STT3B as catalytic subunit, respectively. OST-A and OST-B contain common core subunits RPN1, RPN2, OST48, OST4, DAD1 and TMEM258, and OST-B contains either MAGT1 or TUSC3 as specific accessory subunit. It depends on Mg(2+) as a cofactor. Mn(2+) serves as cofactor.

Its subcellular location is the endoplasmic reticulum membrane. The catalysed reaction is a di-trans,poly-cis-dolichyl diphosphooligosaccharide + L-asparaginyl-[protein] = N(4)-(oligosaccharide-(1-&gt;4)-N-acetyl-beta-D-glucosaminyl-(1-&gt;4)-N-acetyl-beta-D-glucosaminyl)-L-asparaginyl-[protein] + a di-trans,poly-cis-dolichyl diphosphate + H(+). It participates in protein modification; protein glycosylation. Catalytic subunit of the oligosaccharyl transferase (OST) complex that catalyzes the initial transfer of a defined glycan (Glc(3)Man(9)GlcNAc(2) in eukaryotes) from the lipid carrier dolichol-pyrophosphate to an asparagine residue within an Asn-X-Ser/Thr consensus motif in nascent polypeptide chains, the first step in protein N-glycosylation. N-glycosylation occurs cotranslationally and the complex associates with the Sec61 complex at the channel-forming translocon complex that mediates protein translocation across the endoplasmic reticulum (ER). All subunits are required for a maximal enzyme activity. This subunit contains the active site and the acceptor peptide and donor lipid-linked oligosaccharide (LLO) binding pockets. STT3B is present in a small subset of OST complexes and mediates both cotranslational and post-translational N-glycosylation of target proteins: STT3B-containing complexes are required for efficient post-translational glycosylation and while they are less competent than STT3A-containing complexes for cotranslational glycosylation, they have the ability to mediate glycosylation of some nascent sites that are not accessible for STT3A. STT3B-containing complexes also act post-translationally and mediate modification of skipped glycosylation sites in unfolded proteins. Plays a role in ER-associated degradation (ERAD) pathway that mediates ubiquitin-dependent degradation of misfolded endoplasmic reticulum proteins by mediating N-glycosylation of unfolded proteins, which are then recognized by the ERAD pathway and targeted for degradation. The sequence is that of Dolichyl-diphosphooligosaccharide--protein glycosyltransferase subunit STT3B from Mus musculus (Mouse).